The following is a 207-amino-acid chain: Small ribosomal subunit protein uS4c (207 aa).

Residues M92–I155 enclose the S4 RNA-binding domain.

Belongs to the universal ribosomal protein uS4 family. As to quaternary structure, part of the 30S ribosomal subunit. Contacts protein S5. The interaction surface between S4 and S5 is involved in control of translational fidelity.

The protein resides in the plastid. The protein localises to the chloroplast. In terms of biological role, one of the primary rRNA binding proteins, it binds directly to 16S rRNA where it nucleates assembly of the body of the 30S subunit. Its function is as follows. With S5 and S12 plays an important role in translational accuracy. The sequence is that of Small ribosomal subunit protein uS4c (rps4) from Equisetum giganteum (Giant horsetail).